Consider the following 439-residue polypeptide: tRNA(Ile)-lysidine synthase (439 aa).

25-30 (SGGLDS) contributes to the ATP binding site.

It belongs to the tRNA(Ile)-lysidine synthase family.

The protein localises to the cytoplasm. The catalysed reaction is cytidine(34) in tRNA(Ile2) + L-lysine + ATP = lysidine(34) in tRNA(Ile2) + AMP + diphosphate + H(+). Its function is as follows. Ligates lysine onto the cytidine present at position 34 of the AUA codon-specific tRNA(Ile) that contains the anticodon CAU, in an ATP-dependent manner. Cytidine is converted to lysidine, thus changing the amino acid specificity of the tRNA from methionine to isoleucine. This is tRNA(Ile)-lysidine synthase from Edwardsiella ictaluri (strain 93-146).